Consider the following 256-residue polypeptide: 5-keto-4-deoxy-D-glucarate aldolase (256 aa).

H50 acts as the Proton acceptor in catalysis. Residue Q151 participates in substrate binding. Position 153 (E153) interacts with Mg(2+). S178 and D179 together coordinate substrate. D179 is a Mg(2+) binding site.

Belongs to the HpcH/HpaI aldolase family. KDGluc aldolase subfamily. In terms of assembly, homohexamer; trimer of dimers. Mg(2+) is required as a cofactor.

The catalysed reaction is 5-dehydro-4-deoxy-D-glucarate = 2-hydroxy-3-oxopropanoate + pyruvate. It carries out the reaction 2-dehydro-3-deoxy-D-glucarate = 2-hydroxy-3-oxopropanoate + pyruvate. Its pathway is carbohydrate acid metabolism; galactarate degradation; D-glycerate from galactarate: step 2/3. Its function is as follows. Catalyzes the reversible retro-aldol cleavage of both 5-keto-4-deoxy-D-glucarate and 2-keto-3-deoxy-D-glucarate to pyruvate and tartronic semialdehyde. The sequence is that of 5-keto-4-deoxy-D-glucarate aldolase from Escherichia coli O6:H1 (strain CFT073 / ATCC 700928 / UPEC).